The following is a 106-amino-acid chain: MSQFENVTIIKKANVYYDGKVTSRSILFQDGSKKTLGILMPGQYDFGTDEKEIMEILDGELLVKLPGQEVWSEIKGGQSFEVPAKSRFQMDVKKISDYCCSYIQNS.

It belongs to the nucleoside phosphorylase PpnP family.

It carries out the reaction a purine D-ribonucleoside + phosphate = a purine nucleobase + alpha-D-ribose 1-phosphate. The enzyme catalyses adenosine + phosphate = alpha-D-ribose 1-phosphate + adenine. The catalysed reaction is cytidine + phosphate = cytosine + alpha-D-ribose 1-phosphate. It catalyses the reaction guanosine + phosphate = alpha-D-ribose 1-phosphate + guanine. It carries out the reaction inosine + phosphate = alpha-D-ribose 1-phosphate + hypoxanthine. The enzyme catalyses thymidine + phosphate = 2-deoxy-alpha-D-ribose 1-phosphate + thymine. The catalysed reaction is uridine + phosphate = alpha-D-ribose 1-phosphate + uracil. It catalyses the reaction xanthosine + phosphate = alpha-D-ribose 1-phosphate + xanthine. Its function is as follows. Catalyzes the phosphorolysis of diverse nucleosides, yielding D-ribose 1-phosphate and the respective free bases. Can use uridine, adenosine, guanosine, cytidine, thymidine, inosine and xanthosine as substrates. Also catalyzes the reverse reactions. The sequence is that of Pyrimidine/purine nucleoside phosphorylase from Leptospira interrogans serogroup Icterohaemorrhagiae serovar copenhageni (strain Fiocruz L1-130).